A 111-amino-acid chain; its full sequence is uncharacterized protein (111 aa).

This is an uncharacterized protein from Caenorhabditis elegans.